The chain runs to 106 residues: Nucleoid-associated protein Smal_0858 (106 aa).

The disordered stretch occupies residues 81 to 106 (IDAESKSKMGSATAGMQLPPGMKLPF).

Belongs to the YbaB/EbfC family. Homodimer.

The protein localises to the cytoplasm. The protein resides in the nucleoid. Its function is as follows. Binds to DNA and alters its conformation. May be involved in regulation of gene expression, nucleoid organization and DNA protection. This Stenotrophomonas maltophilia (strain R551-3) protein is Nucleoid-associated protein Smal_0858.